Consider the following 362-residue polypeptide: MHRPEPSYCREEPTPCQGVNSTWVPPADTVPETSPTPSSPPAPDSPTPSPQPGYGYSPCEEKPGDPRIRRPMNAFMVWAKDERKRLAQQNPDLHNAVLSKMLGQSWKNLSSAEKRPFVEEAERLRVQHLQDHPNYKYRPRRKKQAKKLKRVDPSPLLRNEGYRGQAMANLSHFRDLHPLGGSGDLESYGLPTPEMSPLDVVEPSEPAFFPPHMREEADPGPFRTYQHGVDFGQEKTLREISLPYSSSPSHMGGFLRTPTASAFYYNPHGGSPACTPLGQLSPPPEAPALEAMDHLGPAELWGDFDRNEFDQYLNMSRTQGPGYPFPMSKLGAPRTIPCEESSLISALSDASTAMYYTPCITG.

The segment covering 1-13 (MHRPEPSYCREEP) has biased composition (basic and acidic residues). Residues 1–68 (MHRPEPSYCR…CEEKPGDPRI (68 aa)) form a disordered region. A compositionally biased stretch (pro residues) spans 37 to 51 (PSSPPAPDSPTPSPQ). Residues 59–68 (CEEKPGDPRI) show a composition bias toward basic and acidic residues. The segment at residues 68 to 136 (IRRPMNAFMV…QHLQDHPNYK (69 aa)) is a DNA-binding region (HMG box). 2 interaction with DNA regions span residues 70-83 (RPMN…KDER) and 94-106 (HNAV…GQSW). Residues 129 to 159 (LQDHPNYKYRPRRKKQAKKLKRVDPSPLLRN) form a disordered region. Positions 135 to 149 (YKYRPRRKKQAKKLK) are enriched in basic residues. Residues 149–209 (KRVDPSPLLR…VVEPSEPAFF (61 aa)) form an important for transcriptional activation region. In terms of domain architecture, Sox C-terminal spans 235–361 (KTLREISLPY…TAMYYTPCIT (127 aa)). The 9aaTAD motif lies at 307 to 315 (NEFDQYLNM).

It is found in the nucleus. In terms of biological role, transcription factor. Binds to the consensus DNA sequence 5'-AACAAT-3'. Also binds 5'-CACAAT-3' and 5'-AATAAT-3' but with a lower affinity. Acts partially redundantly with sox7 during cardiogenesis, acting indirectly through nodal-signaling to induce mesodermal, organizer and endodermal tissues, which then interact to initiate cardiogenesis. Also acts as an antagonist of beta-catenin signaling. The protein is Transcription factor Sox-18 of Xenopus tropicalis (Western clawed frog).